Consider the following 508-residue polypeptide: Glycerol kinase (508 aa).

Residue threonine 14 participates in ADP binding. ATP contacts are provided by threonine 14, threonine 15, and serine 16. A sn-glycerol 3-phosphate-binding site is contributed by threonine 14. Residue arginine 18 coordinates ADP. Residues arginine 84, glutamate 85, tyrosine 136, and aspartate 245 each coordinate sn-glycerol 3-phosphate. Glycerol-binding residues include arginine 84, glutamate 85, tyrosine 136, aspartate 245, and glutamine 246. Residues threonine 267 and glycine 314 each contribute to the ADP site. Residues threonine 267, glycine 314, and glutamine 318 each contribute to the ATP site. Residue asparagine 419 coordinates ADP.

This sequence belongs to the FGGY kinase family.

The catalysed reaction is glycerol + ATP = sn-glycerol 3-phosphate + ADP + H(+). The protein operates within polyol metabolism; glycerol degradation via glycerol kinase pathway; sn-glycerol 3-phosphate from glycerol: step 1/1. Its activity is regulated as follows. Inhibited by fructose 1,6-bisphosphate (FBP). Its function is as follows. Key enzyme in the regulation of glycerol uptake and metabolism. Catalyzes the phosphorylation of glycerol to yield sn-glycerol 3-phosphate. This is Glycerol kinase from Bordetella pertussis (strain Tohama I / ATCC BAA-589 / NCTC 13251).